Consider the following 267-residue polypeptide: Small ribosomal subunit protein uS2 (267 aa).

The interval 1 to 72 (MSGNEKEGLD…QLDEDVMPDE (72 aa)) is disordered. A compositionally biased stretch (acidic residues) spans 10 to 72 (DASDSDFDPS…QLDEDVMPDE (63 aa)).

The protein belongs to the universal ribosomal protein uS2 family. Post-translationally, the N-terminus is blocked.

This Haloarcula marismortui (strain ATCC 43049 / DSM 3752 / JCM 8966 / VKM B-1809) (Halobacterium marismortui) protein is Small ribosomal subunit protein uS2 (rps2).